A 324-amino-acid polypeptide reads, in one-letter code: Olfactory receptor 52N5 (324 aa).

Residues 1-33 (MPLFNSLCWFPTIHVTPPSFILNGIPGLERVHV) are Extracellular-facing. The helical transmembrane segment at 34–54 (WISLPLCTMYIIFLVGNLGLV) threads the bilayer. The Cytoplasmic portion of the chain corresponds to 55–62 (YLIYYEES). A helical transmembrane segment spans residues 63-84 (LHHPMYFFFGHALSLIDLLTCT). At 85-108 (TTLPNALCIFWFSLKEINFNACLA) the chain is on the extracellular side. Residues cysteine 106 and cysteine 198 are joined by a disulfide bond. Residues 109 to 129 (QMFFVHGFTGVESGVLMLMAL) form a helical membrane-spanning segment. Residues 130 to 148 (DRYVAICYPLRYATTLTNP) lie on the Cytoplasmic side of the membrane. The helical transmembrane segment at 149–169 (IIAKAELATFLRGVLLMIPFP) threads the bilayer. The Extracellular segment spans residues 170 to 205 (FLVKRLPFCQSNIISHTYCDHMSVVKLSCASIKVNV). A helical transmembrane segment spans residues 206–226 (IYGLMVALLIGVFDICCISLS). Residues 227–246 (YTLILKAAISLSSSDARQKA) are Cytoplasmic-facing. A helical transmembrane segment spans residues 247–267 (FSTCTAHISAIIITYVPAFFT). At 268–283 (FFAHRFGGHTIPPSLH) the chain is on the extracellular side. Residues 284–304 (IIVANLYLLLPPTLNPIVYGV) form a helical membrane-spanning segment. The Cytoplasmic portion of the chain corresponds to 305–324 (KTKQIRKSVIKFFQGDKGAG).

It belongs to the G-protein coupled receptor 1 family.

The protein localises to the cell membrane. Functionally, odorant receptor. The protein is Olfactory receptor 52N5 (OR52N5) of Homo sapiens (Human).